Reading from the N-terminus, the 436-residue chain is GTPase Der (436 aa).

EngA-type G domains follow at residues 3–167 and 177–352; these read NIVA…PIKP and PRFA…ENRQ. Residues 9 to 16, 56 to 60, 119 to 122, 183 to 190, 230 to 234, and 295 to 298 each bind GTP; these read GRPNVGKS, DTGGY, NKVD, GRPNAGKS, DTAGI, and NKWD. The region spanning 353 to 436 is the KH-like domain; that stretch reads QRISTSKFNE…VPIDIYIREK (84 aa).

It belongs to the TRAFAC class TrmE-Era-EngA-EngB-Septin-like GTPase superfamily. EngA (Der) GTPase family. In terms of assembly, associates with the 50S ribosomal subunit.

In terms of biological role, GTPase that plays an essential role in the late steps of ribosome biogenesis. The chain is GTPase Der from Flavobacterium psychrophilum (strain ATCC 49511 / DSM 21280 / CIP 103535 / JIP02/86).